Reading from the N-terminus, the 334-residue chain is N-acetyl-gamma-glutamyl-phosphate reductase (334 aa).

Cys154 is a catalytic residue.

Belongs to the NAGSA dehydrogenase family. Type 1 subfamily.

The protein resides in the cytoplasm. It catalyses the reaction N-acetyl-L-glutamate 5-semialdehyde + phosphate + NADP(+) = N-acetyl-L-glutamyl 5-phosphate + NADPH + H(+). The protein operates within amino-acid biosynthesis; L-arginine biosynthesis; N(2)-acetyl-L-ornithine from L-glutamate: step 3/4. Catalyzes the NADPH-dependent reduction of N-acetyl-5-glutamyl phosphate to yield N-acetyl-L-glutamate 5-semialdehyde. This chain is N-acetyl-gamma-glutamyl-phosphate reductase, found in Buchnera aphidicola subsp. Acyrthosiphon pisum (strain 5A).